Consider the following 1432-residue polypeptide: Gag-Pol polyprotein (1432 aa).

Gly-2 is lipidated: N-myristoyl glycine; by host. The interval 7 to 31 (ILSGGKLDDWEKIRLRPGGKKQYRI) is interaction with Gp41. The interval 8–43 (LSGGKLDDWEKIRLRPGGKKQYRIKHLVWASRELDR) is interaction with host CALM1. The interaction with host AP3D1 stretch occupies residues 12 to 19 (KLDDWEKI). The interval 14–33 (DDWEKIRLRPGGKKQYRIKH) is interaction with membrane phosphatidylinositol 4,5-bisphosphate and RNA. The short motif at 16 to 22 (WEKIRLR) is the Nuclear export signal element. The Nuclear localization signal motif lies at 26–32 (KKQYRIK). An interaction with membrane phosphatidylinositol 4,5-bisphosphate region spans residues 73 to 77 (EEIKS). Tyr-132 is modified (phosphotyrosine; by host). Positions 189-227 (NTIGGHQAAMQMLKDTINEEAAEWDRVHPVHAGPVAPGQ) are interaction with human PPIA/CYPA and NUP153. A dimerization/Multimerization of capsid protein p24 region spans residues 277 to 363 (YSPVSILDIR…GGPGHKARVL (87 aa)). CCHC-type zinc fingers lie at residues 389 to 406 (VKCF…NCRA) and 410 to 427 (KGCW…DCTE). The disordered stretch occupies residues 443-482 (EAREFSPEQTRANSPTSREPRVRRGDPLPETGAEGQGTVS). Positions 449–459 (PEQTRANSPTS) are enriched in polar residues. Residues 460 to 469 (REPRVRRGDP) show a composition bias toward basic and acidic residues. The dimerization of protease stretch occupies residues 486–490 (PQITL). One can recognise a Peptidase A2 domain in the interval 505-574 (REALLDTGAD…TPVNIIGRNM (70 aa)). The active-site For protease activity; shared with dimeric partner is the Asp-510. 2 dimerization of protease regions span residues 534-540 (GIGGFIK) and 573-585 (NMLT…LNFP). One can recognise a Reverse transcriptase domain in the interval 628–818 (EGKISRIGPE…PPFLWMGYEL (191 aa)). Residues Asp-694, Asp-769, and Asp-770 each contribute to the Mg(2+) site. The RT 'primer grip' stretch occupies residues 811–819 (FLWMGYELH). The Tryptophan repeat motif signature appears at 982-998 (WETWWTDYWQATWIPEW). The region spanning 1018-1141 (IMGAETFYVD…VDKLVSSGIR (124 aa)) is the RNase H type-1 domain. Mg(2+) contacts are provided by Asp-1027, Glu-1062, Asp-1082, and Asp-1133. Residues 1147–1188 (DGIDKAQEEHEKYHSNWRAMASDFNLPPVVAKEIVASCDKCQ) form an Integrase-type zinc finger. His-1156, His-1160, Cys-1184, and Cys-1187 together coordinate Zn(2+). Residues 1198–1348 (VDCSPGIWQL…SAGERIIDII (151 aa)) enclose the Integrase catalytic domain. Residues Asp-1208, Asp-1260, and Glu-1296 each coordinate Mg(2+). A DNA-binding region (integrase-type) is located at residues 1367-1414 (FRVYYRDSRDPIWKGPAKLLWKGEGAVVIQDNSEIKVVPRRKAKIIRD).

In terms of assembly, homotrimer; further assembles as hexamers of trimers. Interacts with gp41 (via C-terminus). Interacts with host CALM1; this interaction induces a conformational change in the Matrix protein, triggering exposure of the myristate group. Interacts with host AP3D1; this interaction allows the polyprotein trafficking to multivesicular bodies during virus assembly. Part of the pre-integration complex (PIC) which is composed of viral genome, matrix protein, Vpr and integrase. Homodimer; the homodimer further multimerizes as homohexamers or homopentamers. Interacts with human PPIA/CYPA; This interaction stabilizes the capsid. Interacts with human NUP153. Interacts with host PDZD8; this interaction stabilizes the capsid. Interacts with monkey TRIM5; this interaction destabilizes the capsid. As to quaternary structure, homodimer, whose active site consists of two apposed aspartic acid residues. In terms of assembly, heterodimer of p66 RT and p51 RT (RT p66/p51). Heterodimerization of RT is essential for DNA polymerase activity. The overall folding of the subdomains is similar in p66 RT and p51 RT but the spatial arrangements of the subdomains are dramatically different. Homotetramer; may further associate as a homohexadecamer. Part of the pre-integration complex (PIC) which is composed of viral genome, matrix protein, Vpr and integrase. Interacts with human SMARCB1/INI1 and human PSIP1/LEDGF isoform 1. Interacts with human KPNA3; this interaction might play a role in nuclear import of the pre-integration complex. Interacts with human NUP153; this interaction might play a role in nuclear import of the pre-integration complex. The cofactor is Mg(2+). Post-translationally, specific enzymatic cleavages by the viral protease yield mature proteins. The protease is released by autocatalytic cleavage. The polyprotein is cleaved during and after budding, this process is termed maturation. Proteolytic cleavage of p66 RT removes the RNase H domain to yield the p51 RT subunit. Nucleocapsid protein p7 might be further cleaved after virus entry. Tyrosine phosphorylated presumably in the virion by a host kinase. Phosphorylation is apparently not a major regulator of membrane association. In terms of processing, phosphorylated possibly by host MAPK1; this phosphorylation is necessary for Pin1-mediated virion uncoating. Post-translationally, methylated by host PRMT6, impairing its function by reducing RNA annealing and the initiation of reverse transcription.

The protein localises to the host cell membrane. Its subcellular location is the host endosome. It is found in the host multivesicular body. The protein resides in the virion membrane. It localises to the host nucleus. The protein localises to the host cytoplasm. Its subcellular location is the virion. It carries out the reaction Specific for a P1 residue that is hydrophobic, and P1' variable, but often Pro.. The enzyme catalyses Endohydrolysis of RNA in RNA/DNA hybrids. Three different cleavage modes: 1. sequence-specific internal cleavage of RNA. Human immunodeficiency virus type 1 and Moloney murine leukemia virus enzymes prefer to cleave the RNA strand one nucleotide away from the RNA-DNA junction. 2. RNA 5'-end directed cleavage 13-19 nucleotides from the RNA end. 3. DNA 3'-end directed cleavage 15-20 nucleotides away from the primer terminus.. The catalysed reaction is 3'-end directed exonucleolytic cleavage of viral RNA-DNA hybrid.. It catalyses the reaction DNA(n) + a 2'-deoxyribonucleoside 5'-triphosphate = DNA(n+1) + diphosphate. Its activity is regulated as follows. Protease: The viral protease is inhibited by many synthetic protease inhibitors (PIs), such as amprenavir, atazanavir, indinavir, loprinavir, nelfinavir, ritonavir and saquinavir. Use of protease inhibitors in tritherapy regimens permit more ambitious therapeutic strategies. Reverse transcriptase/ribonuclease H: RT can be inhibited either by nucleoside RT inhibitors (NRTIs) or by non nucleoside RT inhibitors (NNRTIs). NRTIs act as chain terminators, whereas NNRTIs inhibit DNA polymerization by binding a small hydrophobic pocket near the RT active site and inducing an allosteric change in this region. Classical NRTIs are abacavir, adefovir (PMEA), didanosine (ddI), lamivudine (3TC), stavudine (d4T), tenofovir (PMPA), zalcitabine (ddC), and zidovudine (AZT). Classical NNRTIs are atevirdine (BHAP U-87201E), delavirdine, efavirenz (DMP-266), emivirine (I-EBU), and nevirapine (BI-RG-587). The tritherapies used as a basic effective treatment of AIDS associate two NRTIs and one NNRTI. Functionally, mediates, with Gag polyprotein, the essential events in virion assembly, including binding the plasma membrane, making the protein-protein interactions necessary to create spherical particles, recruiting the viral Env proteins, and packaging the genomic RNA via direct interactions with the RNA packaging sequence (Psi). Gag-Pol polyprotein may regulate its own translation, by the binding genomic RNA in the 5'-UTR. At low concentration, the polyprotein would promote translation, whereas at high concentration, the polyprotein would encapsidate genomic RNA and then shut off translation. Its function is as follows. Targets the polyprotein to the plasma membrane via a multipartite membrane-binding signal, that includes its myristoylated N-terminus. Matrix protein is part of the pre-integration complex. Implicated in the release from host cell mediated by Vpu. Binds to RNA. In terms of biological role, forms the conical core that encapsulates the genomic RNA-nucleocapsid complex in the virion. Most core are conical, with only 7% tubular. The core is constituted by capsid protein hexamer subunits. The core is disassembled soon after virion entry. Host restriction factors such as TRIM5-alpha or TRIMCyp bind retroviral capsids and cause premature capsid disassembly, leading to blocks in reverse transcription. Capsid restriction by TRIM5 is one of the factors which restricts HIV-1 to the human species. Host PIN1 apparently facilitates the virion uncoating. On the other hand, interactions with PDZD8 or CYPA stabilize the capsid. Encapsulates and protects viral dimeric unspliced genomic RNA (gRNA). Binds these RNAs through its zinc fingers. Acts as a nucleic acid chaperone which is involved in rearangement of nucleic acid secondary structure during gRNA retrotranscription. Also facilitates template switch leading to recombination. As part of the polyprotein, participates in gRNA dimerization, packaging, tRNA incorporation and virion assembly. Functionally, aspartyl protease that mediates proteolytic cleavages of Gag and Gag-Pol polyproteins during or shortly after the release of the virion from the plasma membrane. Cleavages take place as an ordered, step-wise cascade to yield mature proteins. This process is called maturation. Displays maximal activity during the budding process just prior to particle release from the cell. Also cleaves Nef and Vif, probably concomitantly with viral structural proteins on maturation of virus particles. Hydrolyzes host EIF4GI and PABP1 in order to shut off the capped cellular mRNA translation. The resulting inhibition of cellular protein synthesis serves to ensure maximal viral gene expression and to evade host immune response. Also mediates cleavage of host YTHDF3. Mediates cleavage of host CARD8, thereby activating the CARD8 inflammasome, leading to the clearance of latent HIV-1 in patient CD4(+) T-cells after viral reactivation; in contrast, HIV-1 can evade CARD8-sensing when its protease remains inactive in infected cells prior to viral budding. Its function is as follows. Multifunctional enzyme that converts the viral RNA genome into dsDNA in the cytoplasm, shortly after virus entry into the cell. This enzyme displays a DNA polymerase activity that can copy either DNA or RNA templates, and a ribonuclease H (RNase H) activity that cleaves the RNA strand of RNA-DNA heteroduplexes in a partially processive 3' to 5' endonucleasic mode. Conversion of viral genomic RNA into dsDNA requires many steps. A tRNA(3)-Lys binds to the primer-binding site (PBS) situated at the 5'-end of the viral RNA. RT uses the 3' end of the tRNA primer to perform a short round of RNA-dependent minus-strand DNA synthesis. The reading proceeds through the U5 region and ends after the repeated (R) region which is present at both ends of viral RNA. The portion of the RNA-DNA heteroduplex is digested by the RNase H, resulting in a ssDNA product attached to the tRNA primer. This ssDNA/tRNA hybridizes with the identical R region situated at the 3' end of viral RNA. This template exchange, known as minus-strand DNA strong stop transfer, can be either intra- or intermolecular. RT uses the 3' end of this newly synthesized short ssDNA to perform the RNA-dependent minus-strand DNA synthesis of the whole template. RNase H digests the RNA template except for two polypurine tracts (PPTs) situated at the 5'-end and near the center of the genome. It is not clear if both polymerase and RNase H activities are simultaneous. RNase H probably can proceed both in a polymerase-dependent (RNA cut into small fragments by the same RT performing DNA synthesis) and a polymerase-independent mode (cleavage of remaining RNA fragments by free RTs). Secondly, RT performs DNA-directed plus-strand DNA synthesis using the PPTs that have not been removed by RNase H as primers. PPTs and tRNA primers are then removed by RNase H. The 3' and 5' ssDNA PBS regions hybridize to form a circular dsDNA intermediate. Strand displacement synthesis by RT to the PBS and PPT ends produces a blunt ended, linear dsDNA copy of the viral genome that includes long terminal repeats (LTRs) at both ends. In terms of biological role, catalyzes viral DNA integration into the host chromosome, by performing a series of DNA cutting and joining reactions. This enzyme activity takes place after virion entry into a cell and reverse transcription of the RNA genome in dsDNA. The first step in the integration process is 3' processing. This step requires a complex comprising the viral genome, matrix protein, Vpr and integrase. This complex is called the pre-integration complex (PIC). The integrase protein removes 2 nucleotides from each 3' end of the viral DNA, leaving recessed CA OH's at the 3' ends. In the second step, the PIC enters cell nucleus. This process is mediated through integrase and Vpr proteins, and allows the virus to infect a non dividing cell. This ability to enter the nucleus is specific of lentiviruses, other retroviruses cannot and rely on cell division to access cell chromosomes. In the third step, termed strand transfer, the integrase protein joins the previously processed 3' ends to the 5' ends of strands of target cellular DNA at the site of integration. The 5'-ends are produced by integrase-catalyzed staggered cuts, 5 bp apart. A Y-shaped, gapped, recombination intermediate results, with the 5'-ends of the viral DNA strands and the 3' ends of target DNA strands remaining unjoined, flanking a gap of 5 bp. The last step is viral DNA integration into host chromosome. This involves host DNA repair synthesis in which the 5 bp gaps between the unjoined strands are filled in and then ligated. Since this process occurs at both cuts flanking the HIV genome, a 5 bp duplication of host DNA is produced at the ends of HIV-1 integration. Alternatively, Integrase may catalyze the excision of viral DNA just after strand transfer, this is termed disintegration. The chain is Gag-Pol polyprotein (gag-pol) from Homo sapiens (Human).